Here is a 471-residue protein sequence, read N- to C-terminus: Tryptophanase (471 aa).

An N6-acetyllysine mark is found at K5, K115, and K156. Position 270 is an N6-(pyridoxal phosphate)lysine (K270). Position 450 is an N6-acetyllysine (K450).

It belongs to the beta-eliminating lyase family. In terms of assembly, homotetramer. Pyridoxal 5'-phosphate is required as a cofactor.

The enzyme catalyses L-tryptophan + H2O = indole + pyruvate + NH4(+). It functions in the pathway amino-acid degradation; L-tryptophan degradation via pyruvate pathway; indole and pyruvate from L-tryptophan: step 1/1. In Escherichia coli (strain SMS-3-5 / SECEC), this protein is Tryptophanase.